The chain runs to 214 residues: MRIILLGAPGAGKGTQAQFIMEQYGIPQISTGDMLRAAVKAGTPLGLEAKKVMDAGQLVSDDLIIGLVKERIAQDDCAKGFLLDGFPRTIPQADAMAANGISIDHVIEIDVPDEEIVKRMSGRRVHPGSGRVYHVVFNPPKVEGKDDVTGEDLAIRPDDEEATVRKRLAIYHEQTKPLVEYYGKVAAAGQTKYNKFDGTQSVAAVSEQLASVLK.

10-15 (GAGKGT) serves as a coordination point for ATP. An NMP region spans residues 30–59 (STGDMLRAAVKAGTPLGLEAKKVMDAGQLV). AMP-binding positions include T31, R36, 57–59 (QLV), 85–88 (GFPR), and Q92. Positions 122-159 (GRRVHPGSGRVYHVVFNPPKVEGKDDVTGEDLAIRPDD) are LID. ATP-binding positions include R123 and 132–133 (VY). Positions 156 and 167 each coordinate AMP. Q200 provides a ligand contact to ATP.

It belongs to the adenylate kinase family. Monomer.

Its subcellular location is the cytoplasm. It carries out the reaction AMP + ATP = 2 ADP. It participates in purine metabolism; AMP biosynthesis via salvage pathway; AMP from ADP: step 1/1. Functionally, catalyzes the reversible transfer of the terminal phosphate group between ATP and AMP. Plays an important role in cellular energy homeostasis and in adenine nucleotide metabolism. This chain is Adenylate kinase, found in Shewanella putrefaciens (strain CN-32 / ATCC BAA-453).